The chain runs to 181 residues: MARRGQQPPPQQAPPAQKNQPGKFNPAEFVKPGLTEEEVLEIKEAFDLFDTDGTQSIDPKELKAAMTSLGFEAKNQTIYQMISDLDTDGSGQIDFAEFLKLMTARISERDSKADIQKVFNLFDSERAGVVTLKDLRKVAKELGETMDDSELQEMIDRADSDGDAQVTFEDFYNIMTKKTFA.

The segment at 1 to 29 is disordered; it reads MARRGQQPPPQQAPPAQKNQPGKFNPAEF. Positions 14-23 are enriched in low complexity; the sequence is PPAQKNQPGK. EF-hand domains are found at residues 37 to 72, 73 to 108, 110 to 145, and 146 to 181; these read EEVL…LGFE, AKNQ…RISE, DSKA…LGET, and MDDS…KTFA. Ca(2+) contacts are provided by Asp50, Asp52, Thr54, Ser56, Glu61, Asp86, Asp88, Ser90, Gln92, and Glu97.

It belongs to the centrin family. Monomer.

The protein localises to the cytoplasm. The protein resides in the cytoskeleton. Its function is as follows. Plays a fundamental role in microtubule organizing center structure and function. Component of the infraciliary lattice (ICL) and the ciliary basal bodies. The protein is Caltractin ICL1a (Icl1a) of Paramecium tetraurelia.